A 76-amino-acid chain; its full sequence is Omega-conotoxin-like TxO5 (76 aa).

The first 22 residues, 1–22 (MKLTCMVIVAVLFLTAWTFVTA), serve as a signal peptide directing secretion. The propeptide occupies 23–50 (ITSNGLENLFPNAHHEMKNPEASKLNKR). Cystine bridges form between C51–C66, C58–C70, and C65–C75.

It belongs to the conotoxin O1 superfamily. Expressed by the venom duct.

The protein resides in the secreted. Omega-conotoxins act at presynaptic membranes, they bind and block voltage-gated calcium channels (Cav). This chain is Omega-conotoxin-like TxO5 (TXO5), found in Conus textile (Cloth-of-gold cone).